A 216-amino-acid polypeptide reads, in one-letter code: Ceramide-1-phosphate transfer protein (216 aa).

Positions 56, 60, 108, 112, and 152 each coordinate an N-acylsphingoid base 1-phosphate.

It belongs to the GLTP family.

It localises to the cytoplasm. The protein resides in the cytosol. The protein localises to the golgi apparatus. Its subcellular location is the trans-Golgi network membrane. It is found in the cell membrane. It localises to the endosome membrane. The protein resides in the nucleus outer membrane. The catalysed reaction is N-(hexadecanoyl)-sphing-4-enine-1-phosphate(in) = N-(hexadecanoyl)-sphing-4-enine-1-phosphate(out). It catalyses the reaction N-(9Z-octadecenoyl)-sphing-4-enine-1-phosphate(in) = N-(9Z-octadecenoyl)-sphing-4-enine-1-phosphate(out). In terms of biological role, mediates the intracellular transfer of ceramide-1-phosphate (C1P) between organelle membranes and the cell membrane. Required for normal structure of the Golgi stacks. Can bind phosphoceramides with a variety of aliphatic chains, but has a preference for lipids with saturated C16:0 or monounsaturated C18:1 aliphatic chains, and is inefficient with phosphoceramides containing lignoceryl (C24:0). Plays a role in the regulation of the cellular levels of ceramide-1-phosphate, and thereby contributes to the regulation of phospholipase PLA2G4A activity and the release of arachidonic acid. Has no activity with galactosylceramide, lactosylceramide, sphingomyelin, phosphatidylcholine, phosphatidic acid and ceramide. C1P transfer is stimulated by phosphatidylserine in C1P source vesicles. Regulates autophagy, inflammasome mediated IL1B and IL18 processing, and pyroptosis, but not apoptosis. The protein is Ceramide-1-phosphate transfer protein (Cptp) of Rattus norvegicus (Rat).